Consider the following 158-residue polypeptide: Low molecular weight phosphotyrosine protein phosphatase (158 aa).

An N-acetylalanine modification is found at alanine 2. The Nucleophile role is filled by cysteine 13. The active site involves arginine 19. Residue aspartate 130 is the Proton donor of the active site. A phosphotyrosine mark is found at tyrosine 132 and tyrosine 133.

This sequence belongs to the low molecular weight phosphotyrosine protein phosphatase family.

It is found in the cytoplasm. The enzyme catalyses O-phospho-L-tyrosyl-[protein] + H2O = L-tyrosyl-[protein] + phosphate. The catalysed reaction is a phosphate monoester + H2O = an alcohol + phosphate. Functionally, acts on tyrosine phosphorylated proteins, low-MW aryl phosphates and natural and synthetic acyl phosphates. The protein is Low molecular weight phosphotyrosine protein phosphatase (ACP1) of Gallus gallus (Chicken).